Consider the following 156-residue polypeptide: Small ribosomal subunit protein uS7 (156 aa).

This sequence belongs to the universal ribosomal protein uS7 family. Part of the 30S ribosomal subunit. Contacts proteins S9 and S11.

One of the primary rRNA binding proteins, it binds directly to 16S rRNA where it nucleates assembly of the head domain of the 30S subunit. Is located at the subunit interface close to the decoding center, probably blocks exit of the E-site tRNA. The polypeptide is Small ribosomal subunit protein uS7 (Mycobacterium ulcerans (strain Agy99)).